The sequence spans 333 residues: Dihydroorotate dehydrogenase (quinone) (333 aa).

Residues 56 to 60 (AGLDK) and threonine 80 contribute to the FMN site. Substrate is bound at residue lysine 60. 105–109 (NRMGF) contacts substrate. Asparagine 133 and asparagine 166 together coordinate FMN. Residue asparagine 166 participates in substrate binding. Catalysis depends on serine 169, which acts as the Nucleophile. A substrate-binding site is contributed by asparagine 171. Positions 211 and 239 each coordinate FMN. 240–241 (NT) lines the substrate pocket. Residues glycine 262, glycine 291, and 312 to 313 (YS) contribute to the FMN site.

This sequence belongs to the dihydroorotate dehydrogenase family. Type 2 subfamily. As to quaternary structure, monomer. Requires FMN as cofactor.

Its subcellular location is the cell membrane. It carries out the reaction (S)-dihydroorotate + a quinone = orotate + a quinol. It participates in pyrimidine metabolism; UMP biosynthesis via de novo pathway; orotate from (S)-dihydroorotate (quinone route): step 1/1. Functionally, catalyzes the conversion of dihydroorotate to orotate with quinone as electron acceptor. The polypeptide is Dihydroorotate dehydrogenase (quinone) (Legionella pneumophila (strain Lens)).